The chain runs to 183 residues: UPF0200 protein Memar_1556 (183 aa).

8 to 15 (GMPASGKG) provides a ligand contact to ATP.

It belongs to the UPF0200 family.

This chain is UPF0200 protein Memar_1556, found in Methanoculleus marisnigri (strain ATCC 35101 / DSM 1498 / JR1).